We begin with the raw amino-acid sequence, 917 residues long: Protein translocase subunit SecA (917 aa).

ATP-binding positions include Q87, 105 to 109, and D516; that span reads GEGKT. Zn(2+) contacts are provided by C901, C903, C912, and H913.

The protein belongs to the SecA family. As to quaternary structure, monomer and homodimer. Part of the essential Sec protein translocation apparatus which comprises SecA, SecYEG and auxiliary proteins SecDF-YajC and YidC. Zn(2+) serves as cofactor.

The protein localises to the cell inner membrane. The protein resides in the cytoplasm. It catalyses the reaction ATP + H2O + cellular proteinSide 1 = ADP + phosphate + cellular proteinSide 2.. Functionally, part of the Sec protein translocase complex. Interacts with the SecYEG preprotein conducting channel. Has a central role in coupling the hydrolysis of ATP to the transfer of proteins into and across the cell membrane, serving both as a receptor for the preprotein-SecB complex and as an ATP-driven molecular motor driving the stepwise translocation of polypeptide chains across the membrane. The chain is Protein translocase subunit SecA from Acidovorax ebreus (strain TPSY) (Diaphorobacter sp. (strain TPSY)).